A 358-amino-acid polypeptide reads, in one-letter code: Arginine kinase (358 aa).

Positions 2–84 (SDADLFSKLD…LDEVIKDYHK (83 aa)) constitute a Phosphagen kinase N-terminal domain. 57 to 61 (GVGIY) serves as a coordination point for substrate. Positions 112-350 (FIVSTRVRVG…EEILKREKEL (239 aa)) constitute a Phosphagen kinase C-terminal domain. Residues 115 to 119 (STRVR) and histidine 178 contribute to the ATP site. Glutamate 218 contacts substrate. An ATP-binding site is contributed by arginine 222. Position 265 (cysteine 265) interacts with substrate. ATP-binding positions include 274–278 (RASVH) and 303–308 (RGIHGE). Glutamate 308 provides a ligand contact to substrate.

The protein belongs to the ATP:guanido phosphotransferase family.

The catalysed reaction is L-arginine + ATP = N(omega)-phospho-L-arginine + ADP + H(+). This chain is Arginine kinase, found in Turbo cornutus (Horned turban).